The sequence spans 105 residues: uncharacterized protein (105 aa).

Residues 8 to 28 (FMTAGIIIALIIAVLAPFLAS) traverse the membrane as a helical segment. A disordered region spans residues 32-53 (DGLESTAEKVMPNPETEPVLES). A helical transmembrane segment spans residues 72–92 (VSMVIGTILVLAIAYGVGAVF).

It to M.jannaschii MJ1570.

Its subcellular location is the cell membrane. This is an uncharacterized protein from Methanothermobacter thermautotrophicus (strain ATCC 29096 / DSM 1053 / JCM 10044 / NBRC 100330 / Delta H) (Methanobacterium thermoautotrophicum).